Consider the following 223-residue polypeptide: N-(5'-phosphoribosyl)anthranilate isomerase (223 aa).

It belongs to the TrpF family.

The catalysed reaction is N-(5-phospho-beta-D-ribosyl)anthranilate = 1-(2-carboxyphenylamino)-1-deoxy-D-ribulose 5-phosphate. The protein operates within amino-acid biosynthesis; L-tryptophan biosynthesis; L-tryptophan from chorismate: step 3/5. This is N-(5'-phosphoribosyl)anthranilate isomerase from Bradyrhizobium diazoefficiens (strain JCM 10833 / BCRC 13528 / IAM 13628 / NBRC 14792 / USDA 110).